Consider the following 190-residue polypeptide: ATP synthase subunit b (190 aa).

Residues 24 to 44 traverse the membrane as a helical segment; sequence IVGSLICFVVILFFFWKLVLP.

Belongs to the ATPase B chain family. In terms of assembly, F-type ATPases have 2 components, F(1) - the catalytic core - and F(0) - the membrane proton channel. F(1) has five subunits: alpha(3), beta(3), gamma(1), delta(1), epsilon(1). F(0) has three main subunits: a(1), b(2) and c(10-14). The alpha and beta chains form an alternating ring which encloses part of the gamma chain. F(1) is attached to F(0) by a central stalk formed by the gamma and epsilon chains, while a peripheral stalk is formed by the delta and b chains.

The protein localises to the cell membrane. Functionally, f(1)F(0) ATP synthase produces ATP from ADP in the presence of a proton or sodium gradient. F-type ATPases consist of two structural domains, F(1) containing the extramembraneous catalytic core and F(0) containing the membrane proton channel, linked together by a central stalk and a peripheral stalk. During catalysis, ATP synthesis in the catalytic domain of F(1) is coupled via a rotary mechanism of the central stalk subunits to proton translocation. In terms of biological role, component of the F(0) channel, it forms part of the peripheral stalk, linking F(1) to F(0). This chain is ATP synthase subunit b, found in Leifsonia xyli subsp. xyli (strain CTCB07).